The following is a 1187-amino-acid chain: ATP-dependent DNA helicase MPH1 (1187 aa).

One can recognise a Helicase ATP-binding domain in the interval 144-311 (IVERAFYDNL…QIIDNLNISK (168 aa)). An ATP-binding site is contributed by 157 to 164 (LPTGLGKT). Positions 259-262 (DEAH) match the DEAH box motif. In terms of domain architecture, Helicase C-terminal spans 486 to 681 (ELDDFFKNHE…FIQLRPQHRM (196 aa)). Disordered regions lie at residues 542-576 (VENF…MTGM), 781-848 (DKLV…NNQV), and 941-1003 (PEKP…LGVK). Residues 547–556 (KKKQKGQTKK) are compositionally biased toward basic residues. The span at 564–576 (TRSSSENAQMTGM) shows a compositional bias: polar residues. Positions 781 to 817 (DKLVDSDSESEVDKENENVIQEVDKSKNQEQNDHIIT) are enriched in basic and acidic residues. The segment covering 822-848 (TEQSVAGNTKSTTNGTSYSEPENNNQV) has biased composition (polar residues). Positions 967–977 (SNSISIPSSTT) are enriched in low complexity. Residues 980–989 (SHNEVTRKVV) are compositionally biased toward basic and acidic residues.

It belongs to the DEAD box helicase family. DEAH subfamily. FANCM sub-subfamily. In terms of assembly, interacts with the MHF histone-fold complex to form the FANCM-MHF complex.

The protein resides in the nucleus. It carries out the reaction ATP + H2O = ADP + phosphate + H(+). In terms of biological role, ATP-dependent DNA helicase involved in DNA damage repair by homologous recombination and in genome maintenance. Capable of unwinding D-loops. Plays a role in limiting crossover recombinants during mitotic DNA double-strand break (DSB) repair. Component of a FANCM-MHF complex which promotes gene conversion at blocked replication forks, probably by reversal of the stalled fork. The chain is ATP-dependent DNA helicase MPH1 from Candida albicans (strain SC5314 / ATCC MYA-2876) (Yeast).